Here is a 269-residue protein sequence, read N- to C-terminus: Undecaprenyl-diphosphatase (269 aa).

A run of 8 helical transmembrane segments spans residues 1-21 (MSIFQAIILGAVQGLAEFLPI), 39-59 (LPILFDILLHVATLAAVCTVF), 86-106 (LMMIAAIIVATAVTGVIGLLL), 112-132 (TIDIRLIPIFFIITGLLLIAS), 144-164 (VTLLTAAITGLAQGIGVIPGI), 184-204 (AGEFSFLLSIPAILAAFILEI), 210-230 (LLAGVSPISLISGMISAFVVG), and 249-269 (FAFYLIPLGLGLSIYFWGFAG).

Belongs to the UppP family.

The protein resides in the cell inner membrane. The enzyme catalyses di-trans,octa-cis-undecaprenyl diphosphate + H2O = di-trans,octa-cis-undecaprenyl phosphate + phosphate + H(+). In terms of biological role, catalyzes the dephosphorylation of undecaprenyl diphosphate (UPP). Confers resistance to bacitracin. This is Undecaprenyl-diphosphatase from Treponema denticola (strain ATCC 35405 / DSM 14222 / CIP 103919 / JCM 8153 / KCTC 15104).